A 336-amino-acid polypeptide reads, in one-letter code: Dihydroorotate dehydrogenase (quinone) (336 aa).

Residues 62–66 and threonine 86 each bind FMN; that span reads AGLDK. Lysine 66 contributes to the substrate binding site. Residue 111-115 participates in substrate binding; it reads NRMGF. The FMN site is built by asparagine 139 and asparagine 172. Residue asparagine 172 coordinates substrate. Serine 175 (nucleophile) is an active-site residue. Substrate is bound at residue asparagine 177. FMN-binding residues include lysine 217 and threonine 245. Substrate is bound at residue 246–247; sequence NT. FMN-binding positions include glycine 268, glycine 297, and 318–319; that span reads YS.

It belongs to the dihydroorotate dehydrogenase family. Type 2 subfamily. As to quaternary structure, monomer. Requires FMN as cofactor.

The protein resides in the cell membrane. The catalysed reaction is (S)-dihydroorotate + a quinone = orotate + a quinol. The protein operates within pyrimidine metabolism; UMP biosynthesis via de novo pathway; orotate from (S)-dihydroorotate (quinone route): step 1/1. Catalyzes the conversion of dihydroorotate to orotate with quinone as electron acceptor. This Citrobacter koseri (strain ATCC BAA-895 / CDC 4225-83 / SGSC4696) protein is Dihydroorotate dehydrogenase (quinone).